The sequence spans 430 residues: MLNKPEVLIEAITAREILDSRGRPTIEAEVLLETGAFGIAQVPSGASTGSFEAHELRDDDPARYAGKGVLTAVRNVKEKIAPQLLGTNAFDQASIDQKMIDRDGSSNKKELGANAILGVSLATAKAASAELDIPLYRYLGGPLANVLPVPMMNVLNGGSHADNNVDFQEFMIMPVGADSFTEGLRWGAEVFATLSKVLKERKLLSGVGDEGGYAPNLASNQEALDLLIEAIERSNYKPGEQIALAMDVASSEFYKDGQYVYDGSAHSPQEFIDYLAKLVSEYPIISIEDGLQEEDWDNWKLHTQSLGSRIQLVGDDLFVTNPTRLQRGIDLGVANSILIKLNQIGTLTETLETIALATRCQYTSVISHRSGETEDTTIADLAVATRAGQIKTGSLCRSERVAKYNRLLRIEEELGDRALYAPKVGLGPKF.

Gln-168 is a binding site for (2R)-2-phosphoglycerate. The active-site Proton donor is Glu-210. Mg(2+)-binding residues include Asp-247, Glu-288, and Asp-315. (2R)-2-phosphoglycerate-binding residues include Lys-340, Arg-369, Ser-370, and Lys-391. Lys-340 serves as the catalytic Proton acceptor.

This sequence belongs to the enolase family. The cofactor is Mg(2+).

It is found in the cytoplasm. The protein localises to the secreted. It localises to the cell surface. The catalysed reaction is (2R)-2-phosphoglycerate = phosphoenolpyruvate + H2O. Its pathway is carbohydrate degradation; glycolysis; pyruvate from D-glyceraldehyde 3-phosphate: step 4/5. Functionally, catalyzes the reversible conversion of 2-phosphoglycerate (2-PG) into phosphoenolpyruvate (PEP). It is essential for the degradation of carbohydrates via glycolysis. The chain is Enolase from Rippkaea orientalis (strain PCC 8801 / RF-1) (Cyanothece sp. (strain PCC 8801)).